Here is a 523-residue protein sequence, read N- to C-terminus: MAAHRSWLLVSFFLLEVLLLEAAKILTISTLSASHYILMNRVSQILQGGGHDVIKLLYEGGDIPDFRKENSSYQVINWRLPEDQQKTFENRWHRLIDEYAYGRSKYHTLLKIHQYFADLCSHLLSRKDIMELLQKENFDLVLLDSMDLCSFLIVEKLGKRFVSFLPFQFSYMDFGLPNAPLSYAPVYGSGLTDQMDFWGRVKNILMFFHFTKKRRDIFSQYGNTVQEHFAEGSQPVLSDLLLKAELWFVNSDFALDFARPLFPNTVYVGGLLDKPVQPIPQDLEDFISQFGDSGFVLVALGSVVSMIQSKEIIKEMNSAFAHLPQGVLWTCKSSHWPKDVSLAPNVKIMDWLPQIDLLAHPSIRLFVTHGGMNSVMEAVHHGVPMVGIPFFGDQPENMVRVEAKNLGVSIQLQTLKAESFLLTMKEVIEDQRYKTAAMASKVIRQSHPLTPAQRLVGWIDHILQTGGAAHLKPYAFQQPWHEQYMLDVFLFLLGLTLGTLWLSVKVLVAVTRYLSISRKVKQA.

Residues 1 to 22 (MAAHRSWLLVSFFLLEVLLLEA) form the signal peptide. Residues 23-487 (AKILTISTLS…QPWHEQYMLD (465 aa)) lie on the Extracellular side of the membrane. An N-linked (GlcNAc...) asparagine glycan is attached at N70. A helical membrane pass occupies residues 488–508 (VFLFLLGLTLGTLWLSVKVLV). At 509-523 (AVTRYLSISRKVKQA) the chain is on the cytoplasmic side.

Belongs to the UDP-glycosyltransferase family. Highly expressed in kidney, while it is expressed at low levels in liver. Not detected in other tissues examined.

Its subcellular location is the membrane. It catalyses the reaction glucuronate acceptor + UDP-alpha-D-glucuronate = acceptor beta-D-glucuronoside + UDP + H(+). In terms of biological role, UDP-glucuronosyltransferases catalyze phase II biotransformation reactions in which lipophilic substrates are conjugated with glucuronic acid to increase water solubility and enhance excretion. They are of major importance in the conjugation and subsequent elimination of potentially toxic xenobiotics and endogenous compounds. The sequence is that of UDP-glucuronosyltransferase 3A1 (Ugt3a1) from Mus musculus (Mouse).